The primary structure comprises 118 residues: Large ribosomal subunit protein bL19 (118 aa).

The protein belongs to the bacterial ribosomal protein bL19 family.

This protein is located at the 30S-50S ribosomal subunit interface and may play a role in the structure and function of the aminoacyl-tRNA binding site. In Geotalea daltonii (strain DSM 22248 / JCM 15807 / FRC-32) (Geobacter daltonii), this protein is Large ribosomal subunit protein bL19.